The sequence spans 465 residues: MLPLWTLSLLLGAVAGKEVCYERLGCFSDDSPWSGITERPLHILPWSPKDVNTRFLLYTNENPNNFQEVAADSSSISGSNFKTNRKTRFIIHGFIDKGEENWLANVCKNLFKVESVNCICVDWKGGSRTGYTQASQNIRIVGAEVAYFVEFLQSAFGYSPSNVHVIGHSLGAHAAGEAGRRTNGTIGRITGLDPAEPCFQGTPELVRLDPSDAKFVDVIHTDGAPIVPNLGFGMSQVVGHLDFFPNGGVEMPGCKKNILSQIVDIDGIWEGTRDFAACNHLRSYKYYTDSIVNPDGFAGFPCASYNVFTANKCFPCPSGGCPQMGHYADRYPGKTNDVGQKFYLDTGDASNFARWRYKVSVTLSGKKVTGHILVSLFGNKGNSKQYEIFKGTLKPDSTHSNEFDSDVDVGDLQMVKFIWYNNVINPTLPRVGASKIIVETNVGKQFNFCSPETVREEVLLTLTPC.

The first 16 residues, 1–16 (MLPLWTLSLLLGAVAG), serve as a signal peptide directing secretion. Intrachain disulfides connect C20-C26 and C107-C118. The Nucleophile role is filled by S169. N-linked (GlcNAc...) asparagine glycosylation occurs at N183. The Charge relay system role is filled by D193. Positions 204, 207, 209, and 212 each coordinate Ca(2+). C254 and C278 are oxidised to a cystine. The active-site Charge relay system is the H280. Intrachain disulfides connect C302–C313, C316–C321, and C449–C465. The region spanning 355-465 (WRYKVSVTLS…EEVLLTLTPC (111 aa)) is the PLAT domain.

This sequence belongs to the AB hydrolase superfamily. Lipase family. In terms of assembly, forms a 1:1 stoichiometric complex with (pro)colipase/CLPS.

The protein resides in the secreted. The catalysed reaction is a triacylglycerol + H2O = a diacylglycerol + a fatty acid + H(+). It catalyses the reaction 1,2,3-tributanoylglycerol + H2O = dibutanoylglycerol + butanoate + H(+). It carries out the reaction 1,2,3-tri-(9Z-octadecenoyl)-glycerol + H2O = di-(9Z)-octadecenoylglycerol + (9Z)-octadecenoate + H(+). The enzyme catalyses all-trans-retinyl hexadecanoate + H2O = all-trans-retinol + hexadecanoate + H(+). The catalysed reaction is 1,2-di-(9Z-octadecenoyl)-glycerol + H2O = (9Z-octadecenoyl)-glycerol + (9Z)-octadecenoate + H(+). With respect to regulation, inhibited by bile salts, is reactivated by (pro)colipase/CLPS. Functionally, plays an important role in fat metabolism. It preferentially splits the esters of long-chain fatty acids at positions 1 and 3, producing mainly 2-monoacylglycerol and free fatty acids, and shows considerably higher activity against insoluble emulsified substrates than against soluble ones. The protein is Pancreatic triacylglycerol lipase of Homo sapiens (Human).